Consider the following 209-residue polypeptide: tRNA (guanine-N(7)-)-methyltransferase (209 aa).

S-adenosyl-L-methionine contacts are provided by Asp35, Glu60, Asn87, and Asp113. The active site involves Asp113. Substrate is bound by residues Lys117 and Asp149.

It belongs to the class I-like SAM-binding methyltransferase superfamily. TrmB family.

It catalyses the reaction guanosine(46) in tRNA + S-adenosyl-L-methionine = N(7)-methylguanosine(46) in tRNA + S-adenosyl-L-homocysteine. It participates in tRNA modification; N(7)-methylguanine-tRNA biosynthesis. Catalyzes the formation of N(7)-methylguanine at position 46 (m7G46) in tRNA. The chain is tRNA (guanine-N(7)-)-methyltransferase from Prochlorococcus marinus subsp. pastoris (strain CCMP1986 / NIES-2087 / MED4).